The following is a 562-amino-acid chain: Probable sesquiterpene synthase (562 aa).

The Mg(2+) site is built by Asp-315, Asp-319, and Glu-467. The short motif at 315 to 319 (DDIYD) is the DDXXD motif element.

This sequence belongs to the terpene synthase family. Tpsa subfamily. The cofactor is Mg(2+). It depends on Mn(2+) as a cofactor.

Functionally, sesquiterpene synthase. This chain is Probable sesquiterpene synthase (SesquiTPS), found in Santalum austrocaledonicum (Sandalwood).